Here is a 1653-residue protein sequence, read N- to C-terminus: Alpha-2-macroglobulin (1653 aa).

Positions 1 to 17 (MKKLRVAACMLMLALAG) are cleaved as a signal peptide. Cys-18 carries the N-palmitoyl cysteine lipid modification. Cys-18 carries S-diacylglycerol cysteine lipidation. Residues 1187–1190 (CLEQ) constitute a cross-link (isoglutamyl cysteine thioester (Cys-Gln)). A coiled-coil region spans residues 1559–1589 (NQNLANGSASLEQSGGEVQNLLNQMQQASIK).

Belongs to the protease inhibitor I39 (alpha-2-macroglobulin) family. Bacterial alpha-2-macroglobulin subfamily. In terms of assembly, may form homooligomers.

It localises to the cell inner membrane. Protects the bacterial cell from host peptidases. Acts by a 'trapping' mechanism. Cleavage of the bait-region domain by host peptidases leads to a global conformational change, which results in entrapment of the host peptidase and activation of the thioester bond that covalently binds the attacking host peptidase. Trapped peptidases are still active except against very large substrates. May protect the entire periplam, including the lipoproteins anchored to the periplasmic side of the outer membrane, against intruding endopeptidases. The polypeptide is Alpha-2-macroglobulin (yfhM) (Escherichia coli (strain K12)).